Reading from the N-terminus, the 1069-residue chain is Enteropeptidase (1069 aa).

Residues 1–18 are Cytoplasmic-facing; it reads MKSSRDEAVGHHSISSFE. The helical; Signal-anchor for type II membrane protein transmembrane segment at 19 to 47 threads the bilayer; that stretch reads VMLSALFIMLMVFSIGLIAVSWLAVKESE. Over 48-1069 the chain is Extracellular; that stretch reads GDAALGKSHE…FIEWIHSFLH (1022 aa). An SEA domain is found at 54–169; the sequence is KSHEVRGTFK…NSIDITASLS (116 aa). Residues N147, N197, and N212 are each glycosylated (N-linked (GlcNAc...) asparagine). An LDL-receptor class A 1 domain is found at 227 to 268; the sequence is IECQPGSRPCAHAWNCVATDLFCDGEVNCPDGSDEDTGLCAT. 4 cysteine pairs are disulfide-bonded: C229/C242, C236/C255, C249/C266, and C270/C298. Residues 270–379 form the CUB 1 domain; that stretch reads CDGRFLLTGD…IGFNATYSTF (110 aa). Residues N373, N380, N433, N515, N579, and N675 are each glycosylated (N-linked (GlcNAc...) asparagine). The MAM domain maps to 387–549; it reads YEKIDCTFDD…ISLTNGICSQ (163 aa). The cysteines at positions 569 and 597 are disulfide-linked. Residues 569 to 679 form the CUB 2 domain; that stretch reads CGGPFELWEP…KGFKANFTSG (111 aa). The LDL-receptor class A 2 domain occupies 686–724; that stretch reads EPCQDDEFQCKDGNCIPLGNLCDSYPHCRDGSDEASCVR. Disulfide bonds link C688/C700, C695/C713, and C707/C722. The SRCR domain maps to 723–816; it reads VRFLNGTRSN…LILLQCNHKS (94 aa). 4 N-linked (GlcNAc...) asparagine glycosylation sites follow: N727, N751, N770, and N791. Cystine bridges form between C802–C812, C817–C945, C859–C875, C959–C1027, C991–C1006, and C1017–C1045. Positions 830-1069 constitute a Peptidase S1 domain; sequence IVGGSDAQAG…FIEWIHSFLH (240 aa). The Charge relay system role is filled by H874. N897 carries an N-linked (GlcNAc...) asparagine glycan. The Charge relay system role is filled by D925. 2 N-linked (GlcNAc...) asparagine glycosylation sites follow: N936 and N999. The active-site Charge relay system is S1021.

This sequence belongs to the peptidase S1 family. As to quaternary structure, heterodimer of a catalytic (light) chain and a multidomain (heavy) chain linked by a disulfide bond. The chains are derived from a single precursor that is cleaved by a trypsin-like protease.

It localises to the membrane. It carries out the reaction Activation of trypsinogen by selective cleavage of 6-Lys-|-Ile-7 bond.. Its function is as follows. Responsible for initiating activation of pancreatic proteolytic proenzymes (trypsin, chymotrypsin and carboxypeptidase A). It catalyzes the conversion of trypsinogen to trypsin which in turn activates other proenzymes including chymotrypsinogen, procarboxypeptidases, and proelastases. The chain is Enteropeptidase (Tmprss15) from Mus musculus (Mouse).